We begin with the raw amino-acid sequence, 336 residues long: 4-hydroxythreonine-4-phosphate dehydrogenase (336 aa).

Substrate contacts are provided by His-135 and Thr-136. Residues His-165, His-210, and His-265 each contribute to the a divalent metal cation site. Substrate-binding residues include Lys-273, Asn-282, and Arg-291.

This sequence belongs to the PdxA family. Homodimer. Requires Zn(2+) as cofactor. The cofactor is Mg(2+). It depends on Co(2+) as a cofactor.

The protein resides in the cytoplasm. It carries out the reaction 4-(phosphooxy)-L-threonine + NAD(+) = 3-amino-2-oxopropyl phosphate + CO2 + NADH. The protein operates within cofactor biosynthesis; pyridoxine 5'-phosphate biosynthesis; pyridoxine 5'-phosphate from D-erythrose 4-phosphate: step 4/5. Its function is as follows. Catalyzes the NAD(P)-dependent oxidation of 4-(phosphooxy)-L-threonine (HTP) into 2-amino-3-oxo-4-(phosphooxy)butyric acid which spontaneously decarboxylates to form 3-amino-2-oxopropyl phosphate (AHAP). This is 4-hydroxythreonine-4-phosphate dehydrogenase from Marinobacter nauticus (strain ATCC 700491 / DSM 11845 / VT8) (Marinobacter aquaeolei).